Reading from the N-terminus, the 496-residue chain is uncharacterized protein (496 aa).

Basic and acidic residues predominate over residues Leu118–Asn129. A disordered region spans residues Leu118 to Ser187. Residues Thr151–Ser187 show a composition bias toward polar residues.

This is an uncharacterized protein from Acanthamoeba polyphaga mimivirus (APMV).